Consider the following 167-residue polypeptide: Alanine- and arginine-rich domain-containing protein (167 aa).

Positions 140 to 167 (LKKRQDQELASKPQSPQDKEMNSECGSA) are disordered.

In terms of tissue distribution, preferentially expressed in testis both in embryo and adult. Expressed at much lower level in other tissues.

The protein is Alanine- and arginine-rich domain-containing protein (Aard) of Mus musculus (Mouse).